Here is a 457-residue protein sequence, read N- to C-terminus: Gamma-aminobutyric acid receptor subunit gamma-4 (457 aa).

The signal sequence occupies residues 1–21; sequence MPAMVLLLCLALGPALRSARC. Residues 22–256 lie on the Extracellular side of the membrane; that stretch reads ESTEEYDYDY…VSFDLSRRMG (235 aa). Asn-35 and Asn-112 each carry an N-linked (GlcNAc...) asparagine glycan. Cys-173 and Cys-187 are oxidised to a cystine. An N-linked (GlcNAc...) asparagine glycan is attached at Asn-230. 3 consecutive transmembrane segments (helical) span residues 257 to 279, 283 to 305, and 317 to 339; these read YFAI…SFWI, STPA…STIS, and AMDL…YATL. The Cytoplasmic segment spans residues 340–433; that stretch reads NYLVGNKKPL…VRIHISRLDS (94 aa). Residues 434-457 traverse the membrane as a helical segment; that stretch reads YSRVFFPTAFLLFNIVYWIAYLYL.

This sequence belongs to the ligand-gated ion channel (TC 1.A.9) family. Gamma-aminobutyric acid receptor (TC 1.A.9.5) subfamily. GABRG4 sub-subfamily. As to quaternary structure, generally pentameric. There are five types of GABA(A) receptor chains: alpha, beta, gamma, delta, and rho. As to expression, abundant in several brain regions, including the ectostriatum, nucleus rotundus and hyperstriatum ventrale.

The protein localises to the postsynaptic cell membrane. It localises to the cell membrane. GABA, the major inhibitory neurotransmitter in the vertebrate brain, mediates neuronal inhibition by binding to the GABA/benzodiazepine receptor and opening an integral chloride channel. The protein is Gamma-aminobutyric acid receptor subunit gamma-4 (GABRG4) of Gallus gallus (Chicken).